A 307-amino-acid polypeptide reads, in one-letter code: UDP-3-O-acyl-N-acetylglucosamine deacetylase (307 aa).

The Zn(2+) site is built by H78, H241, and D245. H268 acts as the Proton donor in catalysis.

This sequence belongs to the LpxC family. Zn(2+) is required as a cofactor.

The catalysed reaction is a UDP-3-O-[(3R)-3-hydroxyacyl]-N-acetyl-alpha-D-glucosamine + H2O = a UDP-3-O-[(3R)-3-hydroxyacyl]-alpha-D-glucosamine + acetate. The protein operates within glycolipid biosynthesis; lipid IV(A) biosynthesis; lipid IV(A) from (3R)-3-hydroxytetradecanoyl-[acyl-carrier-protein] and UDP-N-acetyl-alpha-D-glucosamine: step 2/6. Functionally, catalyzes the hydrolysis of UDP-3-O-myristoyl-N-acetylglucosamine to form UDP-3-O-myristoylglucosamine and acetate, the committed step in lipid A biosynthesis. This is UDP-3-O-acyl-N-acetylglucosamine deacetylase from Verminephrobacter eiseniae (strain EF01-2).